A 383-amino-acid polypeptide reads, in one-letter code: Serine protease 23 (383 aa).

The signal sequence occupies residues 1 to 19; the sequence is MAGIPGLLFLLFLLLCAVG. An N-linked (GlcNAc...) asparagine glycan is attached at asparagine 93. The tract at residues 108–127 is disordered; the sequence is SSGGGAQHRDSGSSGKSRRK. Serine 109 carries the phosphoserine; by FAM20C modification. Cysteine 160 and cysteine 176 are disulfide-bonded. Histidine 175 functions as the Charge relay system in the catalytic mechanism. Asparagine 207 is a glycosylation site (N-linked (GlcNAc...) asparagine). Active-site charge relay system residues include aspartate 240 and serine 316.

This sequence belongs to the peptidase S1 family.

The protein resides in the secreted. The chain is Serine protease 23 (PRSS23) from Macaca mulatta (Rhesus macaque).